Reading from the N-terminus, the 539-residue chain is Trigger factor (539 aa).

Residues 163 to 252 form the PPIase FKBP-type domain; that stretch reads GDQLTVQIET…VLDVQERLLP (90 aa). Low complexity-rich tracts occupy residues 434 to 447 and 475 to 484; these read SFEQAASPEAASEP and AASPEAASEP. The segment at 434–539 is disordered; it reads SFEQAASPEA…DVATPEARTE (106 aa). The span at 509–528 shows a compositional bias: polar residues; it reads TETPIVSQEENGESVENQSV.

Belongs to the FKBP-type PPIase family. Tig subfamily.

The protein resides in the cytoplasm. It carries out the reaction [protein]-peptidylproline (omega=180) = [protein]-peptidylproline (omega=0). In terms of biological role, involved in protein export. Acts as a chaperone by maintaining the newly synthesized protein in an open conformation. Functions as a peptidyl-prolyl cis-trans isomerase. This Roseiflexus sp. (strain RS-1) protein is Trigger factor.